The sequence spans 451 residues: tRNA(Ile)-lysidine synthase (451 aa).

21–26 contributes to the ATP binding site; the sequence is SGGLDS.

It belongs to the tRNA(Ile)-lysidine synthase family.

Its subcellular location is the cytoplasm. It catalyses the reaction cytidine(34) in tRNA(Ile2) + L-lysine + ATP = lysidine(34) in tRNA(Ile2) + AMP + diphosphate + H(+). Functionally, ligates lysine onto the cytidine present at position 34 of the AUA codon-specific tRNA(Ile) that contains the anticodon CAU, in an ATP-dependent manner. Cytidine is converted to lysidine, thus changing the amino acid specificity of the tRNA from methionine to isoleucine. This is tRNA(Ile)-lysidine synthase from Yersinia pseudotuberculosis serotype O:1b (strain IP 31758).